The primary structure comprises 156 residues: 6,7-dimethyl-8-ribityllumazine synthase (156 aa).

Residues Phe-23, 57–59 (AFE), and 81–83 (AVI) each bind 5-amino-6-(D-ribitylamino)uracil. 86–87 (ST) is a (2S)-2-hydroxy-3-oxobutyl phosphate binding site. His-89 acts as the Proton donor in catalysis. Phe-114 contributes to the 5-amino-6-(D-ribitylamino)uracil binding site. Arg-128 contacts (2S)-2-hydroxy-3-oxobutyl phosphate.

The protein belongs to the DMRL synthase family.

The enzyme catalyses (2S)-2-hydroxy-3-oxobutyl phosphate + 5-amino-6-(D-ribitylamino)uracil = 6,7-dimethyl-8-(1-D-ribityl)lumazine + phosphate + 2 H2O + H(+). It functions in the pathway cofactor biosynthesis; riboflavin biosynthesis; riboflavin from 2-hydroxy-3-oxobutyl phosphate and 5-amino-6-(D-ribitylamino)uracil: step 1/2. Catalyzes the formation of 6,7-dimethyl-8-ribityllumazine by condensation of 5-amino-6-(D-ribitylamino)uracil with 3,4-dihydroxy-2-butanone 4-phosphate. This is the penultimate step in the biosynthesis of riboflavin. The polypeptide is 6,7-dimethyl-8-ribityllumazine synthase (Campylobacter curvus (strain 525.92)).